We begin with the raw amino-acid sequence, 729 residues long: 1,4-alpha-glucan branching enzyme GlgB (729 aa).

Aspartate 409 (nucleophile) is an active-site residue. The active-site Proton donor is glutamate 462.

It belongs to the glycosyl hydrolase 13 family. GlgB subfamily. As to quaternary structure, monomer.

It carries out the reaction Transfers a segment of a (1-&gt;4)-alpha-D-glucan chain to a primary hydroxy group in a similar glucan chain.. Its pathway is glycan biosynthesis; glycogen biosynthesis. In terms of biological role, catalyzes the formation of the alpha-1,6-glucosidic linkages in glycogen by scission of a 1,4-alpha-linked oligosaccharide from growing alpha-1,4-glucan chains and the subsequent attachment of the oligosaccharide to the alpha-1,6 position. In Saccharophagus degradans (strain 2-40 / ATCC 43961 / DSM 17024), this protein is 1,4-alpha-glucan branching enzyme GlgB.